Here is an 81-residue protein sequence, read N- to C-terminus: Putative defensin-like protein 31 (81 aa).

Positions 1–26 (MTSSSKCLFFVFLCLAALLTPYLAEA) are cleaved as a signal peptide. Disulfide bonds link Cys-38/Cys-58, Cys-44/Cys-70, and Cys-48/Cys-72.

The protein belongs to the DEFL family.

Its subcellular location is the secreted. This is Putative defensin-like protein 31 from Arabidopsis thaliana (Mouse-ear cress).